The primary structure comprises 166 residues: Large ribosomal subunit protein uL10 (166 aa).

It belongs to the universal ribosomal protein uL10 family. In terms of assembly, part of the ribosomal stalk of the 50S ribosomal subunit. The N-terminus interacts with L11 and the large rRNA to form the base of the stalk. The C-terminus forms an elongated spine to which L12 dimers bind in a sequential fashion forming a multimeric L10(L12)X complex.

Its function is as follows. Forms part of the ribosomal stalk, playing a central role in the interaction of the ribosome with GTP-bound translation factors. In Neisseria meningitidis serogroup A / serotype 4A (strain DSM 15465 / Z2491), this protein is Large ribosomal subunit protein uL10 (rplJ).